The following is a 393-amino-acid chain: 8-amino-7-oxononanoate synthase (393 aa).

Arginine 18 contacts substrate. 105–106 (GY) is a pyridoxal 5'-phosphate binding site. Histidine 130 contributes to the substrate binding site. Pyridoxal 5'-phosphate is bound by residues serine 178, histidine 206, and threonine 234. Residue lysine 237 is modified to N6-(pyridoxal phosphate)lysine. Threonine 353 contacts substrate.

Belongs to the class-II pyridoxal-phosphate-dependent aminotransferase family. BioF subfamily. Homodimer. Pyridoxal 5'-phosphate is required as a cofactor.

It carries out the reaction 6-carboxyhexanoyl-[ACP] + L-alanine + H(+) = (8S)-8-amino-7-oxononanoate + holo-[ACP] + CO2. The protein operates within cofactor biosynthesis; biotin biosynthesis. Catalyzes the decarboxylative condensation of pimeloyl-[acyl-carrier protein] and L-alanine to produce 8-amino-7-oxononanoate (AON), [acyl-carrier protein], and carbon dioxide. The sequence is that of 8-amino-7-oxononanoate synthase from Geotalea daltonii (strain DSM 22248 / JCM 15807 / FRC-32) (Geobacter daltonii).